A 463-amino-acid chain; its full sequence is UDP-N-acetylmuramoylalanine--D-glutamate ligase (463 aa).

109–115 is an ATP binding site; it reads GTDGKST.

This sequence belongs to the MurCDEF family.

It is found in the cytoplasm. The catalysed reaction is UDP-N-acetyl-alpha-D-muramoyl-L-alanine + D-glutamate + ATP = UDP-N-acetyl-alpha-D-muramoyl-L-alanyl-D-glutamate + ADP + phosphate + H(+). It participates in cell wall biogenesis; peptidoglycan biosynthesis. Functionally, cell wall formation. Catalyzes the addition of glutamate to the nucleotide precursor UDP-N-acetylmuramoyl-L-alanine (UMA). The chain is UDP-N-acetylmuramoylalanine--D-glutamate ligase from Leptospira interrogans serogroup Icterohaemorrhagiae serovar Lai (strain 56601).